The sequence spans 551 residues: Arginine--tRNA ligase (551 aa).

Residues 123 to 133 carry the 'HIGH' region motif; it reads ANPTGPLTIGR.

The protein belongs to the class-I aminoacyl-tRNA synthetase family. As to quaternary structure, monomer.

The protein localises to the cytoplasm. The enzyme catalyses tRNA(Arg) + L-arginine + ATP = L-arginyl-tRNA(Arg) + AMP + diphosphate. This Chlorobium limicola (strain DSM 245 / NBRC 103803 / 6330) protein is Arginine--tRNA ligase.